Consider the following 156-residue polypeptide: Transcription elongation factor GreA (156 aa).

Residues 7 to 27 (MTQEGLDKLKLELENLKLVKR) adopt a coiled-coil conformation.

It belongs to the GreA/GreB family.

Necessary for efficient RNA polymerase transcription elongation past template-encoded arresting sites. The arresting sites in DNA have the property of trapping a certain fraction of elongating RNA polymerases that pass through, resulting in locked ternary complexes. Cleavage of the nascent transcript by cleavage factors such as GreA or GreB allows the resumption of elongation from the new 3'terminus. GreA releases sequences of 2 to 3 nucleotides. This Lactococcus lactis subsp. lactis (strain IL1403) (Streptococcus lactis) protein is Transcription elongation factor GreA.